The following is a 585-amino-acid chain: 3-hydroxy-3-methylglutaryl-coenzyme A reductase 1 (585 aa).

Helical transmembrane passes span 38-58 (LYLT…FLLC) and 77-97 (EIVA…FFGI). The tract at residues 98-169 (DFVQSLVLRP…DEMPVTVMTE (72 aa)) is linker. The catalytic stretch occupies residues 170-585 (EDEEIIRSVV…SSKDVSKVSS (416 aa)). Catalysis depends on Glu264, which acts as the Charge relay system. The N-linked (GlcNAc...) asparagine glycan is linked to Asn328. Lys396 serves as the catalytic Charge relay system. An N-linked (GlcNAc...) asparagine glycan is attached at Asn441. Residue Asp472 is the Charge relay system of the active site. The active-site Proton donor is the His570. Asn574 is a glycosylation site (N-linked (GlcNAc...) asparagine).

The protein belongs to the HMG-CoA reductase family.

Its subcellular location is the endoplasmic reticulum membrane. The protein resides in the mitochondrion membrane. It is found in the plastid membrane. The catalysed reaction is (R)-mevalonate + 2 NADP(+) + CoA = (3S)-3-hydroxy-3-methylglutaryl-CoA + 2 NADPH + 2 H(+). Its pathway is metabolic intermediate biosynthesis; (R)-mevalonate biosynthesis; (R)-mevalonate from acetyl-CoA: step 3/3. Functionally, catalyzes the synthesis of mevalonate. The specific precursor of all isoprenoid compounds present in plants. This Gossypium hirsutum (Upland cotton) protein is 3-hydroxy-3-methylglutaryl-coenzyme A reductase 1 (HMG1).